A 970-amino-acid polypeptide reads, in one-letter code: Insulin-degrading enzyme-like 1, peroxisomal (970 aa).

Residue His-69 participates in Zn(2+) binding. Residue Glu-72 is the Proton acceptor of the active site. His-73 serves as a coordination point for Zn(2+). Glu-143 is a catalytic residue. Position 150 (Glu-150) interacts with Zn(2+).

This sequence belongs to the peptidase M16 family. It depends on Zn(2+) as a cofactor.

The protein resides in the peroxisome. In terms of biological role, peptidase that might be involved in pathogen or wound response. Not required for peroxisome biogenesis, indole-3-butyric acid (IBA) metabolism, fatty acid beta-oxidation or degradation of glyoxylate cycle enzymes during seedling development. The protein is Insulin-degrading enzyme-like 1, peroxisomal (PXM16) of Arabidopsis thaliana (Mouse-ear cress).